A 264-amino-acid chain; its full sequence is MNRSTISPVEARQQFRAGLIQPTSGWSAGFAQANLISMPQDLAYDFLLFAQRNPKPCPILEVLNAGETFGGIFGSNATEADIRTDAPQYRIYAHGELIDSPASAVDYWRDDLVSFIIGCSFTFEHPMVQAGVPVRHLEAGRNVPMYETSLACRPAGSLSGNLVVSLRMIPASQVADAVRITSRYPAVHGAPVHIGDPSLIGIDDINNPDFGDAPLSEPSDVPVFWACGVTPQAMVMSSKPPLAITHAPGHMLITDAPDLGFQVP.

Belongs to the D-glutamate cyclase family.

The polypeptide is Putative hydro-lyase Cgl2544/cg2803 (Corynebacterium glutamicum (strain ATCC 13032 / DSM 20300 / JCM 1318 / BCRC 11384 / CCUG 27702 / LMG 3730 / NBRC 12168 / NCIMB 10025 / NRRL B-2784 / 534)).